The chain runs to 1657 residues: Thrombospondin type-1 domain-containing protein 7A (1657 aa).

The N-terminal stretch at 1–47 is a signal peptide; that stretch reads MGLQARRWASGSRGAAGPRRGVLQLLPLPLPLPLLLLLLLRPGAGRA. Residues 48–1607 lie on the Extracellular side of the membrane; it reads AAQGEAEAPT…FGPDGRLKTW (1560 aa). TSP type-1 domains lie at 57–116, 120–192, and 194–247; these read TLYL…KVCD, ELYD…IPCQ, and DCIV…SPCE. N-linked (GlcNAc...) asparagine glycosylation occurs at asparagine 234. The interval 265–311 is disordered; it reads MPHSRQVRQARRRGKNKEREKDRSKGVKDPEARELIKKKRNRNRQNR. Residues 267 to 315 are a coiled coil; sequence HSRQVRQARRRGKNKEREKDRSKGVKDPEARELIKKKRNRNRQNRQENK. The span at 269–280 shows a compositional bias: basic residues; that stretch reads RQVRQARRRGKN. Over residues 281–299 the composition is skewed to basic and acidic residues; the sequence is KEREKDRSKGVKDPEAREL. The segment covering 300-309 has biased composition (basic residues); the sequence is IKKKRNRNRQ. Asparagine 332 carries an N-linked (GlcNAc...) asparagine glycan. 16 consecutive TSP type-1 domains span residues 360–416, 423–510, 512–574, 634–695, 696–769, 771–831, 832–904, 906–959, 960–1033, 1035–1095, 1096–1163, 1166–1220, 1221–1284, 1286–1341, 1342–1412, and 1414–1475; these read ECQV…LSQG, ATYG…IPCP, ECEV…PACY, DCVL…HPCT, VYHW…LPCK, DCIV…QACQ, SYRW…IPCQ, DCQL…CPCD, KYNA…IPCP, DCKL…SDCN, QYLW…LPCP, CVIS…KNCY, HYDY…VECP, NCQL…KPCY, RWQY…QPCP, and DCYL…GQCY. Intrachain disulfides connect cysteine 435–cysteine 505, cysteine 455–cysteine 509, and cysteine 466–cysteine 494. The N-linked (GlcNAc...) asparagine glycan is linked to asparagine 450. N-linked (GlcNAc...) asparagine glycosylation is present at asparagine 500. Intrachain disulfides connect cysteine 635–cysteine 677 and cysteine 646–cysteine 650. Asparagine 679 carries an N-linked (GlcNAc...) asparagine glycan. 7 disulfides stabilise this stretch: cysteine 689–cysteine 694, cysteine 707–cysteine 764, cysteine 728–cysteine 768, cysteine 739–cysteine 752, cysteine 772–cysteine 814, cysteine 783–cysteine 787, and cysteine 824–cysteine 830. N-linked (GlcNAc...) asparagine glycosylation is present at asparagine 717. Asparagine 968 carries N-linked (GlcNAc...) asparagine glycosylation. Cystine bridges form between cysteine 972/cysteine 1028, cysteine 994/cysteine 1032, cysteine 1005/cysteine 1018, cysteine 1036/cysteine 1073, cysteine 1047/cysteine 1051, and cysteine 1090/cysteine 1094. Asparagine 1043 carries N-linked (GlcNAc...) asparagine glycosylation. Asparagine 1182 carries an N-linked (GlcNAc...) asparagine glycan. Cysteine 1213 and cysteine 1219 form a disulfide bridge. Asparagine 1225 is a glycosylation site (N-linked (GlcNAc...) asparagine). 12 disulfide bridges follow: cysteine 1232–cysteine 1279, cysteine 1240–cysteine 1283, cysteine 1251–cysteine 1264, cysteine 1287–cysteine 1325, cysteine 1298–cysteine 1302, cysteine 1335–cysteine 1340, cysteine 1351–cysteine 1407, cysteine 1358–cysteine 1411, cysteine 1369–cysteine 1388, cysteine 1415–cysteine 1459, cysteine 1426–cysteine 1430, and cysteine 1469–cysteine 1474. An N-linked (GlcNAc...) asparagine glycan is attached at asparagine 1276. Residue asparagine 1366 is glycosylated (N-linked (GlcNAc...) asparagine). Residues asparagine 1500 and asparagine 1547 are each glycosylated (N-linked (GlcNAc...) asparagine). Residues 1570-1591 are disordered; the sequence is DVKTSRAVHPTQPSSNPAGRGR. Residues 1608 to 1628 form a helical membrane-spanning segment; sequence VYGVAAGAFVLLIFIVSMIYL. At 1629–1657 the chain is on the cytoplasmic side; it reads ACKKPKKPQRRQNNRLKPLTLAYDGDADM.

Proteolytic cleavage in the extracellular region generates a 210 kDa soluble form. Post-translationally, extensively N-glycosylated. As to expression, detected on kidney podocytes along the glomerular capillary wall (at protein level).

The protein localises to the cell membrane. Its subcellular location is the cell projection. It is found in the secreted. Plays a role in actin cytoskeleton rearrangement. Functionally, the soluble form promotes endothelial cell migration and filopodia formation during sprouting angiogenesis via a FAK-dependent mechanism. This Homo sapiens (Human) protein is Thrombospondin type-1 domain-containing protein 7A (THSD7A).